We begin with the raw amino-acid sequence, 118 residues long: Large ribosomal subunit protein uL18 (118 aa).

The tract at residues 1–25 (MISKPDKNKLRQKRHRRVRGKLSGT) is disordered. A compositionally biased stretch (basic residues) spans 10–20 (LRQKRHRRVRG).

It belongs to the universal ribosomal protein uL18 family. Part of the 50S ribosomal subunit; part of the 5S rRNA/L5/L18/L25 subcomplex. Contacts the 5S and 23S rRNAs.

In terms of biological role, this is one of the proteins that bind and probably mediate the attachment of the 5S RNA into the large ribosomal subunit, where it forms part of the central protuberance. In Streptococcus pneumoniae (strain Hungary19A-6), this protein is Large ribosomal subunit protein uL18.